The sequence spans 124 residues: Small ribosomal subunit protein uS12 (124 aa).

A 3-methylthioaspartic acid modification is found at D89.

The protein belongs to the universal ribosomal protein uS12 family. In terms of assembly, part of the 30S ribosomal subunit. Contacts proteins S8 and S17. May interact with IF1 in the 30S initiation complex.

Functionally, with S4 and S5 plays an important role in translational accuracy. Interacts with and stabilizes bases of the 16S rRNA that are involved in tRNA selection in the A site and with the mRNA backbone. Located at the interface of the 30S and 50S subunits, it traverses the body of the 30S subunit contacting proteins on the other side and probably holding the rRNA structure together. The combined cluster of proteins S8, S12 and S17 appears to hold together the shoulder and platform of the 30S subunit. The chain is Small ribosomal subunit protein uS12 from Aeromonas hydrophila subsp. hydrophila (strain ATCC 7966 / DSM 30187 / BCRC 13018 / CCUG 14551 / JCM 1027 / KCTC 2358 / NCIMB 9240 / NCTC 8049).